A 327-amino-acid chain; its full sequence is UDP-glucose 4-epimerase (327 aa).

Residue Thr119 coordinates substrate. Tyr143 functions as the Proton acceptor in the catalytic mechanism.

It belongs to the NAD(P)-dependent epimerase/dehydratase family. The cofactor is NAD(+).

It carries out the reaction UDP-alpha-D-glucose = UDP-alpha-D-galactose. It functions in the pathway carbohydrate metabolism; galactose metabolism. The protein operates within glycan metabolism; exopolysaccharide biosynthesis. The protein is UDP-glucose 4-epimerase (exoB) of Rhizobium leguminosarum bv. trifolii.